Reading from the N-terminus, the 298-residue chain is ATP-dependent Clp protease proteolytic subunit 5, chloroplastic (298 aa).

The N-terminal 100 residues, 1 to 100 (MAHACVSTSA…SSPYFPAYAQ (100 aa)), are a transit peptide targeting the chloroplast. The residue at position 101 (Gly-101) is an N-acetylglycine. Ser-193 (nucleophile) is an active-site residue. His-218 is an active-site residue.

It belongs to the peptidase S14 family. As to quaternary structure, component of the chloroplastic Clp protease core complex which consist of at least 16 proteins: CLPP4 (3 copies), CLPP5 (3 copies), CLPR4 (2 copies), ClpP1 (1 copy), CLPP6 (1 copy), CLPR2 (1 copy), CLPT1 (1 copy), CLPT2 (1 copy) and 3 copies of CLPP3 and/or CLPR1 and/or CLPR3. The core complex is organized in two heptameric rings, one containing CLPP3,4,5,6 in a 1:2:3:1 ratio and the other CLPP1 and CLPR1,2,3,4 in a 3:1:1:1:1 ratio. Interacts with CHIP. In terms of processing, ubiquitinated in vitro by CHIP. In terms of tissue distribution, mostly expressed in leaves. Also detected in stems, and to a lower extent, in roots (at protein level).

It is found in the plastid. It localises to the chloroplast stroma. The enzyme catalyses Hydrolysis of proteins to small peptides in the presence of ATP and magnesium. alpha-casein is the usual test substrate. In the absence of ATP, only oligopeptides shorter than five residues are hydrolyzed (such as succinyl-Leu-Tyr-|-NHMec, and Leu-Tyr-Leu-|-Tyr-Trp, in which cleavage of the -Tyr-|-Leu- and -Tyr-|-Trp bonds also occurs).. Functionally, cleaves peptides in various proteins in a process that requires ATP hydrolysis. Has a chymotrypsin-like activity. Plays a major role in the degradation of misfolded proteins. In Arabidopsis thaliana (Mouse-ear cress), this protein is ATP-dependent Clp protease proteolytic subunit 5, chloroplastic.